The sequence spans 1207 residues: Systemin receptor SR160 (1207 aa).

The signal sequence occupies residues 1-34 (MKAHKTVFNQHPLSLNKLFFVLLLIFFLPPASPA). The Cys pair 1 motif lies at 71 to 78 (CSFTGVSC). LRR repeat units lie at residues 109 to 131 (NLES…AKSQ), 135 to 157 (TLDS…SSFG), 161 to 181 (NLKS…EMLK), 186 to 207 (SLQV…PWVS), 213 to 234 (ELEF…LDFK), 235 to 257 (NLSY…KDCS), 258 to 280 (NLQH…LSSC), 282 to 304 (KLSF…PSES), 305 to 325 (LQYL…QLAD), 329 to 350 (TVVE…SLGE), 353 to 375 (SLEL…TLLK), 378 to 401 (NIKT…SNLP), 402 to 423 (KLET…GICK), 428 to 450 (NLKV…LSNC), 452 to 474 (QLVS…LGSL), 476 to 499 (KLKD…MYLQ), 500 to 523 (ALEN…SNCT), 524 to 547 (KLNW…GRLS), 548 to 570 (NLAI…LGNC), and 572 to 594 (SLIW…LFKQ). Asn119 is a glycosylation site (N-linked (GlcNAc...) asparagine). Residues Asn166 and Asn196 are each glycosylated (N-linked (GlcNAc...) asparagine). N-linked (GlcNAc...) asparagine glycans are attached at residues Asn235 and Asn245. A glycan (N-linked (GlcNAc...) asparagine) is linked at Asn287. Asn339 and Asn363 each carry an N-linked (GlcNAc...) asparagine glycan. 2 N-linked (GlcNAc...) asparagine glycosylation sites follow: Asn412 and Asn449. Asn521 carries an N-linked (GlcNAc...) asparagine glycan. Asn556, Asn584, Asn646, and Asn662 each carry an N-linked (GlcNAc...) asparagine glycan. LRR repeat units follow at residues 664-686 (SMIF…LGAM), 688-711 (YLSI…GGLK), 712-735 (NVAI…TSLT), and 736-758 (LLGE…APFD). Asn724, Asn746, and Asn767 each carry an N-linked (GlcNAc...) asparagine glycan. Residues 771-779 (CGYPLPLPC) carry the Cys pair 2 motif. The chain crosses the membrane as a helical span at residues 803–823 (SVAMGLLFSLFCIFGLIIVAI). The Protein kinase domain maps to 888-1163 (FHNDSLVGSG…IQVMAMFKEI (276 aa)). Residues 894–902 (VGSGGFGDV) and Lys916 each bind ATP. The Proton acceptor role is filled by Asp1014.

Belongs to the protein kinase superfamily. Ser/Thr protein kinase family. Post-translationally, glycosylated.

The protein localises to the cell membrane. It carries out the reaction L-seryl-[protein] + ATP = O-phospho-L-seryl-[protein] + ADP + H(+). The enzyme catalyses L-threonyl-[protein] + ATP = O-phospho-L-threonyl-[protein] + ADP + H(+). Functionally, receptor with a serine/threonine-protein kinase activity. Involved in the perception of systemin, a peptide hormone responsible for the systemic activation of defense genes in leaves of wounded plants. May also regulate, in response to brassinosteroid binding, a signaling cascade involved in plant development. The protein is Systemin receptor SR160 of Solanum peruvianum (Peruvian tomato).